The chain runs to 332 residues: dTDP-3,4-didehydro-2,6-dideoxy-alpha-D-glucose 3-reductase (332 aa).

17 to 23 (CADIAWR) contacts NADP(+). Position 24 (R24) interacts with substrate. NADP(+)-binding positions include 42-43 (SR), Y63, L79, and H84. The active-site Proton donor is K102. The NADP(+) site is built by R170 and D182. Substrate-binding residues include Y240 and T260.

Belongs to the Gfo/Idh/MocA family. In terms of assembly, homotetramer; dimer of dimers.

It catalyses the reaction dTDP-4-dehydro-2,6-dideoxy-alpha-D-glucose + NADP(+) = dTDP-3,4-didehydro-2,6-dideoxy-alpha-D-glucose + NADPH + H(+). It functions in the pathway antibiotic biosynthesis. In terms of biological role, involved in the biosynthesis of L-digitoxose, an unusual dideoxysugar attached to various pharmacologically active natural products, including the antitumor antibiotic tetrocarcin A, and the antibiotics kijanimicin and jadomycin B. Catalyzes the reduction of the C-3 keto moiety of dTDP-3,4-diketo-2,6-dideoxy-alpha-D-glucose to yield dTDP-4-keto-2,6-dideoxy-alpha-D-glucose. Also able to reduce dTDP-3-keto-6-deoxy-D-galactose and dTDP-3-keto-6-deoxy-D-glucose to yield dTDP-fucose and dTDP-quinovose, respectively. In Actinomadura kijaniata, this protein is dTDP-3,4-didehydro-2,6-dideoxy-alpha-D-glucose 3-reductase.